The chain runs to 89 residues: Small ribosomal subunit protein bS20 (89 aa).

This sequence belongs to the bacterial ribosomal protein bS20 family.

Binds directly to 16S ribosomal RNA. In Phenylobacterium zucineum (strain HLK1), this protein is Small ribosomal subunit protein bS20.